The sequence spans 780 residues: Protein SAV (780 aa).

Residues 253-260 (GPPGTGKT) and 528-535 (GPPGTGKT) contribute to the ATP site.

Belongs to the AAA ATPase family. CDC48 subfamily.

Not yet known, shows ATPase activity. The polypeptide is Protein SAV (sav) (Sulfolobus acidocaldarius (strain ATCC 33909 / DSM 639 / JCM 8929 / NBRC 15157 / NCIMB 11770)).